Reading from the N-terminus, the 377-residue chain is MSRGIVIIGSGFAARQLVKNIRKQDATVALTLIAADSMDEYNKPDLSHVISQAQRADDLTRQSAGEFAEQFNLRLFPHTWITDIDADAHVVKSQDKQWQFDKLVLATGASAFVPPVAGRELMLTLNSQQEYRACETQLRDAQRVLIVGGGLIGSELAMDFCRAGKAVTLIDNAASILASLMPPEVSSRLQHRLTDMGVHLLLKSQLQGLEKTATGIRATLDRDRQVEVDAVIAATGLRPETALARRAGLTINRGVCVDSYLQTSHPDIYALGDCAEINGQVLPFLQPIQLSAMYLAKNLLGGNAPLKLPAMLVKIKTPELPLHLAGETQRCDLNWHIAAESEGMVARGINTEGQLCAFVVSEDRMKEAFALLKTLPA.

It belongs to the FAD-dependent oxidoreductase family. FAD is required as a cofactor.

It localises to the cytoplasm. The catalysed reaction is 2 reduced [nitric oxide reductase rubredoxin domain] + NAD(+) + H(+) = 2 oxidized [nitric oxide reductase rubredoxin domain] + NADH. The protein operates within nitrogen metabolism; nitric oxide reduction. Its function is as follows. One of at least two accessory proteins for anaerobic nitric oxide (NO) reductase. Reduces the rubredoxin moiety of NO reductase. The polypeptide is Nitric oxide reductase FlRd-NAD(+) reductase (Citrobacter koseri (strain ATCC BAA-895 / CDC 4225-83 / SGSC4696)).